We begin with the raw amino-acid sequence, 446 residues long: Phosphoglucosamine mutase (446 aa).

The active-site Phosphoserine intermediate is the Ser-100. Mg(2+)-binding residues include Ser-100, Asp-241, Asp-243, and Asp-245. Ser-100 carries the post-translational modification Phosphoserine.

The protein belongs to the phosphohexose mutase family. Requires Mg(2+) as cofactor. In terms of processing, activated by phosphorylation.

It catalyses the reaction alpha-D-glucosamine 1-phosphate = D-glucosamine 6-phosphate. Catalyzes the conversion of glucosamine-6-phosphate to glucosamine-1-phosphate. This Methylobacterium sp. (strain 4-46) protein is Phosphoglucosamine mutase.